Reading from the N-terminus, the 335-residue chain is Methylthioribose-1-phosphate isomerase (335 aa).

Substrate is bound by residues 47-49 (RGA), R81, and Q184. The active-site Proton donor is D225. 235–236 (NK) is a substrate binding site.

This sequence belongs to the eIF-2B alpha/beta/delta subunits family. MtnA subfamily.

The catalysed reaction is 5-(methylsulfanyl)-alpha-D-ribose 1-phosphate = 5-(methylsulfanyl)-D-ribulose 1-phosphate. It functions in the pathway amino-acid biosynthesis; L-methionine biosynthesis via salvage pathway; L-methionine from S-methyl-5-thio-alpha-D-ribose 1-phosphate: step 1/6. In terms of biological role, catalyzes the interconversion of methylthioribose-1-phosphate (MTR-1-P) into methylthioribulose-1-phosphate (MTRu-1-P). This chain is Methylthioribose-1-phosphate isomerase, found in Synechococcus sp. (strain CC9902).